Reading from the N-terminus, the 104-residue chain is Large ribosomal subunit protein uL24 (104 aa).

It belongs to the universal ribosomal protein uL24 family. In terms of assembly, part of the 50S ribosomal subunit.

One of two assembly initiator proteins, it binds directly to the 5'-end of the 23S rRNA, where it nucleates assembly of the 50S subunit. Its function is as follows. One of the proteins that surrounds the polypeptide exit tunnel on the outside of the subunit. This chain is Large ribosomal subunit protein uL24, found in Shewanella oneidensis (strain ATCC 700550 / JCM 31522 / CIP 106686 / LMG 19005 / NCIMB 14063 / MR-1).